Consider the following 234-residue polypeptide: LexA repressor (234 aa).

Residues 26–46 (FEEMKEALDLKSKSGVHRLIS) constitute a DNA-binding region (H-T-H motif). The segment at 73-100 (AVGKAAPVSQREAANTNSALPPLRAAPK) is disordered. Residues 91–100 (ALPPLRAAPK) show a composition bias toward low complexity. Catalysis depends on for autocatalytic cleavage activity residues Ser-154 and Lys-192.

The protein belongs to the peptidase S24 family. In terms of assembly, homodimer.

The catalysed reaction is Hydrolysis of Ala-|-Gly bond in repressor LexA.. Its function is as follows. Represses a number of genes involved in the response to DNA damage (SOS response), including recA and lexA. In the presence of single-stranded DNA, RecA interacts with LexA causing an autocatalytic cleavage which disrupts the DNA-binding part of LexA, leading to derepression of the SOS regulon and eventually DNA repair. The protein is LexA repressor of Novosphingobium aromaticivorans (strain ATCC 700278 / DSM 12444 / CCUG 56034 / CIP 105152 / NBRC 16084 / F199).